We begin with the raw amino-acid sequence, 170 residues long: Urease accessory protein UreE (170 aa).

This sequence belongs to the UreE family.

It localises to the cytoplasm. In terms of biological role, involved in urease metallocenter assembly. Binds nickel. Probably functions as a nickel donor during metallocenter assembly. The protein is Urease accessory protein UreE of Helicobacter pylori (strain P12).